We begin with the raw amino-acid sequence, 131 residues long: Protein FAM107B (131 aa).

At A2 the chain carries N-acetylalanine. Disordered regions lie at residues 39 to 78 and 100 to 131; these read MNQK…KKKS and KLQE…AQES. An N6-acetyllysine modification is found at K50. Basic and acidic residues predominate over residues 52–78; it reads ELQKVMEKRKRDQVIKQKEEEAQKKKS. The stretch at 61-112 forms a coiled coil; it reads KRDQVIKQKEEEAQKKKSDLEIELLKRQQKLEQLELEKQKLQEEQENAPEFV.

The protein belongs to the FAM107 family.

The polypeptide is Protein FAM107B (Homo sapiens (Human)).